We begin with the raw amino-acid sequence, 489 residues long: Probable cytochrome P450 522A1 (489 aa).

Residues 1–21 (MILTIVIIILTVIFVNKYLLN) traverse the membrane as a helical segment. Cys433 contributes to the heme binding site.

Belongs to the cytochrome P450 family. The cofactor is heme.

The protein resides in the membrane. In Dictyostelium discoideum (Social amoeba), this protein is Probable cytochrome P450 522A1 (cyp522A1).